We begin with the raw amino-acid sequence, 145 residues long: Basic phospholipase A2 cPt10 (145 aa).

An N-terminal signal peptide occupies residues 1–21 (MYPAHLLVLLAVCVSLLGASA). Positions 22 to 27 (IPPLPL) are excised as a propeptide. Disulfide bonds link Cys38-Cys98, Cys54-Cys144, Cys56-Cys72, Cys71-Cys125, Cys78-Cys118, Cys87-Cys111, and Cys105-Cys116. Positions 55, 57, and 59 each coordinate Ca(2+). His75 is an active-site residue. Asp76 lines the Ca(2+) pocket. Residue Asp119 is part of the active site.

The protein belongs to the phospholipase A2 family. Group I subfamily. D49 sub-subfamily. Requires Ca(2+) as cofactor. Expressed by the venom gland.

The protein localises to the secreted. It catalyses the reaction a 1,2-diacyl-sn-glycero-3-phosphocholine + H2O = a 1-acyl-sn-glycero-3-phosphocholine + a fatty acid + H(+). PLA2 catalyzes the calcium-dependent hydrolysis of the 2-acyl groups in 3-sn-phosphoglycerides. This is Basic phospholipase A2 cPt10 from Laticauda semifasciata (Black-banded sea krait).